We begin with the raw amino-acid sequence, 424 residues long: Serine--tRNA ligase (424 aa).

233–235 (TAE) provides a ligand contact to L-serine. 264-266 (RRE) lines the ATP pocket. An L-serine-binding site is contributed by Glu287. 351–354 (EISS) is an ATP binding site. L-serine is bound at residue Ser386.

This sequence belongs to the class-II aminoacyl-tRNA synthetase family. Type-1 seryl-tRNA synthetase subfamily. Homodimer. The tRNA molecule binds across the dimer.

The protein localises to the cytoplasm. It catalyses the reaction tRNA(Ser) + L-serine + ATP = L-seryl-tRNA(Ser) + AMP + diphosphate + H(+). The catalysed reaction is tRNA(Sec) + L-serine + ATP = L-seryl-tRNA(Sec) + AMP + diphosphate + H(+). The protein operates within aminoacyl-tRNA biosynthesis; selenocysteinyl-tRNA(Sec) biosynthesis; L-seryl-tRNA(Sec) from L-serine and tRNA(Sec): step 1/1. In terms of biological role, catalyzes the attachment of serine to tRNA(Ser). Is also able to aminoacylate tRNA(Sec) with serine, to form the misacylated tRNA L-seryl-tRNA(Sec), which will be further converted into selenocysteinyl-tRNA(Sec). This is Serine--tRNA ligase from Pseudothermotoga lettingae (strain ATCC BAA-301 / DSM 14385 / NBRC 107922 / TMO) (Thermotoga lettingae).